We begin with the raw amino-acid sequence, 550 residues long: Chaperonin GroEL (550 aa).

ATP-binding positions include 30 to 33, Lys51, 87 to 91, Gly415, and Asp496; these read TLGP and DGTTT. The tract at residues 526–550 is disordered; it reads PEDEKMPPMPPGGGMGGMGGMGGMY. Gly residues predominate over residues 537–550; the sequence is GGGMGGMGGMGGMY.

This sequence belongs to the chaperonin (HSP60) family. In terms of assembly, forms a cylinder of 14 subunits composed of two heptameric rings stacked back-to-back. Interacts with the co-chaperonin GroES.

It is found in the cytoplasm. The enzyme catalyses ATP + H2O + a folded polypeptide = ADP + phosphate + an unfolded polypeptide.. In terms of biological role, together with its co-chaperonin GroES, plays an essential role in assisting protein folding. The GroEL-GroES system forms a nano-cage that allows encapsulation of the non-native substrate proteins and provides a physical environment optimized to promote and accelerate protein folding. This chain is Chaperonin GroEL, found in Chloroherpeton thalassium (strain ATCC 35110 / GB-78).